A 264-amino-acid chain; its full sequence is Hydroxyethylthiazole kinase (264 aa).

Substrate is bound at residue Met-52. Positions 127 and 173 each coordinate ATP. Position 200 (Gly-200) interacts with substrate.

Belongs to the Thz kinase family. Mg(2+) is required as a cofactor.

It catalyses the reaction 5-(2-hydroxyethyl)-4-methylthiazole + ATP = 4-methyl-5-(2-phosphooxyethyl)-thiazole + ADP + H(+). It functions in the pathway cofactor biosynthesis; thiamine diphosphate biosynthesis; 4-methyl-5-(2-phosphoethyl)-thiazole from 5-(2-hydroxyethyl)-4-methylthiazole: step 1/1. Its function is as follows. Catalyzes the phosphorylation of the hydroxyl group of 4-methyl-5-beta-hydroxyethylthiazole (THZ). This chain is Hydroxyethylthiazole kinase, found in Pectobacterium carotovorum subsp. carotovorum (strain PC1).